We begin with the raw amino-acid sequence, 210 residues long: Thymidylate kinase (210 aa).

ATP is bound at residue 10 to 17; sequence GLEGAGKS.

This sequence belongs to the thymidylate kinase family.

It carries out the reaction dTMP + ATP = dTDP + ADP. Its function is as follows. Phosphorylation of dTMP to form dTDP in both de novo and salvage pathways of dTTP synthesis. This chain is Thymidylate kinase, found in Hamiltonella defensa subsp. Acyrthosiphon pisum (strain 5AT).